Consider the following 182-residue polypeptide: Large ribosomal subunit protein uL5 (182 aa).

As to quaternary structure, part of the 50S ribosomal subunit; part of the 5S rRNA/uL5/uL18/bL25 (TL7) subcomplex; has also been isolated as a complex with 5S rRNA, bL25 (TL7) and DNA binding protein II. Forms a bridge to the 30S subunit in the 70S ribosome, contacting protein uS13; this bridge is straddled by the 5S rRNA. Contacts the P site tRNA.

Functionally, this is one of the proteins that bind and probably mediate the attachment of the 5S RNA into the large ribosomal subunit, where it forms part of the central protuberance. In the 70S ribosome it contacts protein S13 of the 30S subunit (forming bridge B1b) connecting the head of the 30S subunit to the top of the 50S subunit. The bridge itself contacts the P site tRNA and is implicated in movement during ribosome translocation. Also contacts the P site tRNA independently of the intersubunit bridge; the 5S rRNA and some of its associated proteins might help stabilize positioning of ribosome-bound tRNAs. The chain is Large ribosomal subunit protein uL5 (rplE) from Thermus thermophilus (strain ATCC 27634 / DSM 579 / HB8).